The primary structure comprises 171 residues: Bursicon (171 aa).

The N-terminal stretch at 1–31 is a signal peptide; that stretch reads MISSPSTPATFAAGSLVLLCLVLGGGHFALA. Cystine bridges form between Cys47–Cys96, Cys61–Cys110, Cys71–Cys131, Cys75–Cys133, and Cys93–Cys136. The CTCK domain maps to 47–137; it reads CQVTPVIHVL…PLECMCRPCT (91 aa).

As to quaternary structure, heterodimer of burs and pburs.

The protein resides in the secreted. Its function is as follows. Final heterodimeric neurohormone released at the end of the molting cycle, involved in the sclerotization (tanning) of the insect cuticle, melanization and wing spreading. The protein is Bursicon of Culex pipiens pipiens (Northern house mosquito).